Consider the following 587-residue polypeptide: F-box/WD repeat-containing protein sel-10 (587 aa).

The segment covering 1-11 has biased composition (basic and acidic residues); sequence MWPRNDVHMDD. The interval 1 to 53 is disordered; sequence MWPRNDVHMDDGSMTPEDQEPVTDNDMEYNDNGEESSYSNGSSSSYNADKLSS. Over residues 17 to 34 the composition is skewed to acidic residues; that stretch reads EDQEPVTDNDMEYNDNGE. Residues 35–47 show a composition bias toward low complexity; sequence ESSYSNGSSSSYN. The F-box domain occupies 121–167; that stretch reads RDFLSCLPVELGMKILHNLTGYDLLKVAQVSKNWKLISEIDKIWKSL. WD repeat units follow at residues 253–291, 294–333, 336–373, 376–415, 416–455, 461–498, and 501–539; these read GHED…VMYT, GHTG…LLHT, GHTS…HLAT, GHHA…RTLT, GHNN…GQEC, GHTS…CVHM, and GHRS…LIRD.

In terms of assembly, probable component of the SCF(sel-10) E3 ubiquitin-protein ligase complex which includes skr-1 and F-box domain-containing protein sel-10 as a substrate recognition component. Interacts with fem-1, fem-2, and fem-3. Interacts with the intracellular domain of glp-1 and sel-12. Interacts with lin-12. Interacts with skr-1. Interacts with zyg-1. Expressed in tail and head neurons.

The protein resides in the cell projection. It is found in the axon. It localises to the cytoplasm. Functionally, probable substrate recognition component of SCF (SKP1-CUL-F-box protein) E3 ubiquitin-protein ligase complex, which mediates the ubiquitination and subsequent proteasomal degradation of target proteins. Regulates synapse elimination in early development in the motor neuron HSNL. Cell autonomous negative regulator of lin-12/Notch-mediated signaling, with respect to lin-12 activity in cell fate decisions and tumorigenesis. May target the intracellular domains of lin-12/Notch proteins for ubiquitin-dependent degradation. Involved in sex determination by promoting female development. Potential regulator of presenilin. May have a role in egg laying. Regulates zyg-1 levels (possibly redundantly with lin-23) to control centrosome duplication during mitosis. Negatively regulates lin-45 activity and protein stability, probably by targeting it for ubiquitination and proteasomal degradation. In Caenorhabditis elegans, this protein is F-box/WD repeat-containing protein sel-10.